Consider the following 335-residue polypeptide: Phosphate acyltransferase (335 aa).

This sequence belongs to the PlsX family. Homodimer. Probably interacts with PlsY.

The protein localises to the cytoplasm. It catalyses the reaction a fatty acyl-[ACP] + phosphate = an acyl phosphate + holo-[ACP]. The protein operates within lipid metabolism; phospholipid metabolism. Functionally, catalyzes the reversible formation of acyl-phosphate (acyl-PO(4)) from acyl-[acyl-carrier-protein] (acyl-ACP). This enzyme utilizes acyl-ACP as fatty acyl donor, but not acyl-CoA. The sequence is that of Phosphate acyltransferase from Brevibacillus brevis (strain 47 / JCM 6285 / NBRC 100599).